The sequence spans 431 residues: Inactive polypeptide N-acetylgalactosaminyltransferase-like protein 5 (431 aa).

At 1-4 (MKSV) the chain is on the cytoplasmic side. Residues 5 to 27 (IIQGLFCGFLAIGLWASMLLLFL) traverse the membrane as a helical; Signal-anchor for type II membrane protein segment. At 28–431 (HLEQEDMLEN…TERKRKKNRF (404 aa)) the chain is on the lumenal side. Asn68 carries N-linked (GlcNAc...) asparagine glycosylation. 2 disulfide bridges follow: Cys105–Cys336 and Cys327–Cys403. The segment at 114-224 (LPTASIIICF…RVWLEPLLHA (111 aa)) is catalytic subdomain A. The interval 282–344 (PIRSPAMTGG…PCSRVGYNSK (63 aa)) is catalytic subdomain B. N-linked (GlcNAc...) asparagine glycosylation is found at Asn353 and Asn390.

It belongs to the glycosyltransferase 2 family. GalNAc-T subfamily. Mn(2+) serves as cofactor. As to expression, expressed in testis. Mainly expressed in the round and elongated spermatids during spermiogenesis, not in the outermost cells of the seminiferous tubules, which contain spermatogonia and somatic Sertoli cells. Present in the juxtanuclear space in the round spermatids, not in the acrosomal vesicles. In the elongating spermatids, localizes strongly in the acroplaxome, the region between the developing acrosome and nucleus. During differentiation, also weakly detected in the transient manchette containing microtubules. In epididymal spermatozoa, weakly detected in the midpiece, but concentrates mainly in the neck region around the head-tail coupling apparatus (at protein level).

It is found in the late endosome membrane. In terms of biological role, probable inactive glycosyltransferase required during spermatid development. May participate in protein loading into the acrosomes and accumulation of ubiquitin-proteasome systems around the head-tail coupling apparatus region. The polypeptide is Inactive polypeptide N-acetylgalactosaminyltransferase-like protein 5 (Galntl5) (Mus musculus (Mouse)).